The chain runs to 715 residues: Polyribonucleotide nucleotidyltransferase (715 aa).

Mg(2+)-binding residues include D489 and D495. Residues 556–615 (PRIETLRIPTEKIREVIGTGGKVIREICEKTGAKINIEDDGTVKVASSDGNSIKAAINWI) enclose the KH domain. One can recognise an S1 motif domain in the interval 625–693 (GHIYDGTVVK…DRGKVRLSMR (69 aa)).

The protein belongs to the polyribonucleotide nucleotidyltransferase family. Mg(2+) serves as cofactor.

It is found in the cytoplasm. The enzyme catalyses RNA(n+1) + phosphate = RNA(n) + a ribonucleoside 5'-diphosphate. Involved in mRNA degradation. Catalyzes the phosphorolysis of single-stranded polyribonucleotides processively in the 3'- to 5'-direction. The polypeptide is Polyribonucleotide nucleotidyltransferase (Beijerinckia indica subsp. indica (strain ATCC 9039 / DSM 1715 / NCIMB 8712)).